The sequence spans 671 residues: Alpha-1,4-glucan:maltose-1-phosphate maltosyltransferase (671 aa).

Residues Lys-252, Gln-312, and Asp-347 each coordinate alpha-maltose 1-phosphate. Asp-382 functions as the Nucleophile in the catalytic mechanism. Asn-383 is an alpha-maltose 1-phosphate binding site. Glu-411 (proton donor) is an active-site residue. 521–522 (KY) is an alpha-maltose 1-phosphate binding site.

It belongs to the glycosyl hydrolase 13 family. GlgE subfamily. Homodimer.

The catalysed reaction is alpha-maltose 1-phosphate + [(1-&gt;4)-alpha-D-glucosyl](n) = [(1-&gt;4)-alpha-D-glucosyl](n+2) + phosphate. Its function is as follows. Maltosyltransferase that uses maltose 1-phosphate (M1P) as the sugar donor to elongate linear or branched alpha-(1-&gt;4)-glucans. Is involved in a branched alpha-glucan biosynthetic pathway from trehalose, together with TreS, Mak and GlgB. The protein is Alpha-1,4-glucan:maltose-1-phosphate maltosyltransferase of Corynebacterium pseudotuberculosis (strain 1002).